Here is a 158-residue protein sequence, read N- to C-terminus: Endoribonuclease YbeY (158 aa).

Zn(2+) is bound by residues H117, H121, and H127.

Belongs to the endoribonuclease YbeY family. Zn(2+) serves as cofactor.

The protein localises to the cytoplasm. Its function is as follows. Single strand-specific metallo-endoribonuclease involved in late-stage 70S ribosome quality control and in maturation of the 3' terminus of the 16S rRNA. The protein is Endoribonuclease YbeY of Psychromonas ingrahamii (strain DSM 17664 / CCUG 51855 / 37).